We begin with the raw amino-acid sequence, 158 residues long: Cyclic pyranopterin monophosphate synthase (158 aa).

Substrate contacts are provided by residues 74–76 (MCH) and 112–113 (ME). Residue aspartate 127 is part of the active site.

The protein belongs to the MoaC family. As to quaternary structure, homohexamer; trimer of dimers.

It carries out the reaction (8S)-3',8-cyclo-7,8-dihydroguanosine 5'-triphosphate = cyclic pyranopterin phosphate + diphosphate. It participates in cofactor biosynthesis; molybdopterin biosynthesis. In terms of biological role, catalyzes the conversion of (8S)-3',8-cyclo-7,8-dihydroguanosine 5'-triphosphate to cyclic pyranopterin monophosphate (cPMP). The chain is Cyclic pyranopterin monophosphate synthase from Helicobacter pylori (strain J99 / ATCC 700824) (Campylobacter pylori J99).